Consider the following 447-residue polypeptide: Na(+)-translocating NADH-quinone reductase subunit A (447 aa).

Belongs to the NqrA family. As to quaternary structure, composed of six subunits; NqrA, NqrB, NqrC, NqrD, NqrE and NqrF.

It catalyses the reaction a ubiquinone + n Na(+)(in) + NADH + H(+) = a ubiquinol + n Na(+)(out) + NAD(+). In terms of biological role, NQR complex catalyzes the reduction of ubiquinone-1 to ubiquinol by two successive reactions, coupled with the transport of Na(+) ions from the cytoplasm to the periplasm. NqrA to NqrE are probably involved in the second step, the conversion of ubisemiquinone to ubiquinol. This chain is Na(+)-translocating NADH-quinone reductase subunit A, found in Haemophilus influenzae (strain ATCC 51907 / DSM 11121 / KW20 / Rd).